The sequence spans 345 residues: Myb/SANT-like DNA-binding domain-containing protein 4 (345 aa).

The region spanning 4-77 (LKRKRKSNFS…EVKRRYLDWR (74 aa)) is the Myb-like domain. Lys9 participates in a covalent cross-link: Glycyl lysine isopeptide (Lys-Gly) (interchain with G-Cter in SUMO2). Ser106 bears the Phosphoserine mark. Glycyl lysine isopeptide (Lys-Gly) (interchain with G-Cter in SUMO2) cross-links involve residues Lys114 and Lys142. A disordered region spans residues 141 to 160 (VKVEEEERDPQSPEFEIEEE). Residue Thr188 is modified to Phosphothreonine. Residues 203 to 345 (LLVNIEKQKL…LRIQKEGHLQ (143 aa)) adopt a coiled-coil conformation. Glycyl lysine isopeptide (Lys-Gly) (interchain with G-Cter in SUMO2) cross-links involve residues Lys237, Lys254, and Lys273.

The polypeptide is Myb/SANT-like DNA-binding domain-containing protein 4 (MSANTD4) (Bos taurus (Bovine)).